Reading from the N-terminus, the 194-residue chain is Anthranilate synthase component 2 (194 aa).

The region spanning 2 to 194 (KIFFIDNFDS…QSVGFLEGLL (193 aa)) is the Glutamine amidotransferase type-1 domain. Residue 57 to 59 (GPG) coordinates L-glutamine. Cys84 acts as the Nucleophile; for GATase activity in catalysis. L-glutamine contacts are provided by residues Gln88 and 134-135 (SL). Catalysis depends on for GATase activity residues His170 and Glu172.

Heterotetramer consisting of two non-identical subunits: a beta subunit (TrpG) and a large alpha subunit (TrpE).

The enzyme catalyses chorismate + L-glutamine = anthranilate + pyruvate + L-glutamate + H(+). It functions in the pathway amino-acid biosynthesis; L-tryptophan biosynthesis; L-tryptophan from chorismate: step 1/5. Functionally, part of a heterotetrameric complex that catalyzes the two-step biosynthesis of anthranilate, an intermediate in the biosynthesis of L-tryptophan. In the first step, the glutamine-binding beta subunit (TrpG) of anthranilate synthase (AS) provides the glutamine amidotransferase activity which generates ammonia as a substrate that, along with chorismate, is used in the second step, catalyzed by the large alpha subunit of AS (TrpE) to produce anthranilate. In the absence of TrpG, TrpE can synthesize anthranilate directly from chorismate and high concentrations of ammonia. This is Anthranilate synthase component 2 (trpG) from Helicobacter pylori (strain ATCC 700392 / 26695) (Campylobacter pylori).